Reading from the N-terminus, the 301-residue chain is uncharacterized protein (301 aa).

Active-site charge relay system residues include Ser-44 and Tyr-107. Residue Tyr-133 is the Proton donor of the active site. The active-site Schiff-base intermediate with substrate is Lys-162.

This sequence belongs to the DapA family. Homotetramer.

Its subcellular location is the cytoplasm. This is an uncharacterized protein from Pyrobaculum neutrophilum (strain DSM 2338 / JCM 9278 / NBRC 100436 / V24Sta) (Thermoproteus neutrophilus).